The chain runs to 108 residues: MIDIEVLHRVAATLAERKKADPDSSYVSSLYAKGTDAICKKVAEEAAETIMAAKDKDMLHVVWEVTDLWFHSLVLLTHFGLSVDDVLAEFRRREGVSGIDEKKSRTVS.

Belongs to the PRA-PH family.

It is found in the cytoplasm. The enzyme catalyses 1-(5-phospho-beta-D-ribosyl)-ATP + H2O = 1-(5-phospho-beta-D-ribosyl)-5'-AMP + diphosphate + H(+). It participates in amino-acid biosynthesis; L-histidine biosynthesis; L-histidine from 5-phospho-alpha-D-ribose 1-diphosphate: step 2/9. The protein is Phosphoribosyl-ATP pyrophosphatase of Aromatoleum aromaticum (strain DSM 19018 / LMG 30748 / EbN1) (Azoarcus sp. (strain EbN1)).